Consider the following 275-residue polypeptide: Rhamnulose-1-phosphate aldolase (275 aa).

Glu117 is a catalytic residue. His141, His143, and His212 together coordinate Zn(2+).

The protein belongs to the aldolase class II family. RhaD subfamily. Homotetramer. Requires Zn(2+) as cofactor.

Its subcellular location is the cytoplasm. The catalysed reaction is L-rhamnulose 1-phosphate = (S)-lactaldehyde + dihydroxyacetone phosphate. Its pathway is carbohydrate degradation; L-rhamnose degradation; glycerone phosphate from L-rhamnose: step 3/3. In terms of biological role, catalyzes the reversible cleavage of L-rhamnulose-1-phosphate to dihydroxyacetone phosphate (DHAP) and L-lactaldehyde. The protein is Rhamnulose-1-phosphate aldolase of Citrobacter koseri (strain ATCC BAA-895 / CDC 4225-83 / SGSC4696).